The chain runs to 169 residues: Der GTPase-activating protein YihI (169 aa).

2 disordered regions span residues 1–100 (MKPS…AELE) and 144–169 (GLSY…LRGN). Over residues 10–19 (SKGHAKARRK) the composition is skewed to basic residues. Over residues 20-30 (TREELDQEARD) the composition is skewed to basic and acidic residues. Residues 31 to 40 (RKRQKKRRGH) show a composition bias toward basic residues. The span at 49 to 58 (GNTSSGSKGQ) shows a compositional bias: polar residues. The segment covering 147–159 (YDDDEEEEEDEKQ) has biased composition (acidic residues). Residues 160–169 (EDMMRLLRGN) are compositionally biased toward basic and acidic residues.

This sequence belongs to the YihI family. In terms of assembly, interacts with Der.

In terms of biological role, a GTPase-activating protein (GAP) that modifies Der/EngA GTPase function. May play a role in ribosome biogenesis. The sequence is that of Der GTPase-activating protein YihI from Escherichia coli (strain SMS-3-5 / SECEC).